We begin with the raw amino-acid sequence, 493 residues long: Glutathione hydrolase 6 (493 aa).

The Cytoplasmic portion of the chain corresponds to 1 to 54; the sequence is MERAEEPVVYQKLLPWEPSLESEEEVEEEETSEALVLNPRRHQDSSRNKAGGLP. Positions 19–52 are disordered; that stretch reads SLESEEEVEEEETSEALVLNPRRHQDSSRNKAGG. Positions 20-32 are enriched in acidic residues; sequence LESEEEVEEEETS. A helical; Signal-anchor for type II membrane protein membrane pass occupies residues 55-75; that stretch reads GTWARVVAALLLLAVGCSLAV. At 76-493 the chain is on the extracellular side; sequence RQLQNQGRST…PHACCPFQGF (418 aa). The disordered stretch occupies residues 83–105; sequence RSTGSLGSVAPPPGGHSHGPGVY. Residues Asn161 and Asn370 are each glycosylated (N-linked (GlcNAc...) asparagine). Positions 442–455 are enriched in low complexity; that stretch reads PPTQAQHQHQGQQE. The segment at 442-464 is disordered; the sequence is PPTQAQHQHQGQQEPTEHPSTCG.

Belongs to the gamma-glutamyltransferase family. In terms of assembly, heterodimer composed of the light and heavy chains. The active site is located in the light chain. Post-translationally, cleaved by autocatalysis into a large and a small subunit and the autocatalytic cleavage is essential to the functional activation of the enzyme.

It is found in the membrane. It catalyses the reaction an N-terminal (5-L-glutamyl)-[peptide] + an alpha-amino acid = 5-L-glutamyl amino acid + an N-terminal L-alpha-aminoacyl-[peptide]. It carries out the reaction glutathione + H2O = L-cysteinylglycine + L-glutamate. The enzyme catalyses an S-substituted glutathione + H2O = an S-substituted L-cysteinylglycine + L-glutamate. It functions in the pathway sulfur metabolism; glutathione metabolism. In terms of biological role, hydrolyzes and transfers gamma-glutamyl moieties from glutathione and other gamma-glutamyl compounds to acceptors. The polypeptide is Glutathione hydrolase 6 (Homo sapiens (Human)).